A 327-amino-acid chain; its full sequence is Polyprenyl transferase esdpC (327 aa).

8 consecutive transmembrane segments (helical) span residues 35–54 (YNPL…AGAS), 73–93 (LLVF…NDWI), 118–138 (EALI…AYTL), 140–160 (GHNV…YPFG), 171–191 (YPQY…WLAI), 202–222 (IMES…LNTA), 239–259 (VYFL…ALVL), and 307–327 (ENFA…LLKS).

The protein belongs to the UbiA prenyltransferase family. Mg(2+) serves as cofactor.

It is found in the membrane. It participates in secondary metabolite biosynthesis; terpenoid biosynthesis. Functionally, olyprenyl transferase; part of the cluster that mediates the biosynthesis of shearones, diterpenoid pyrones (DPs) which are structurally diverse meroterpenoids consisting of a diterpene linked by a pyrone, and which may exhibit a range of bioactivities. Within the pathway, esdpC takes part to the biosynthesis of the molecular scaffold by catalyzing the C-3 geranylgeranylation reaction of the alpha-pyrone produced by esdpA. The molecular scaffold is commonly biosynthesized by a series of enzymes including the non-reducing polyketide synthase (NR-PKS) esdpA that generates an alpha-pyrone; the prenyltransferase esdpC that attaches a geranylgeranyl pyrophosphate (GGPP) produced by the GGPP synthase (GGPPS) esdpD onto the pyrone unit; the FAD-dependent monooxygenase esdpE that converts an olefin on the diterpene unit into an epoxide; and the terpene cyclase esdpB that catalyzes the cyclization reactions to give the molecular backbone shearone A. In the modification steps, esdpF oxidizes the hydroxy group to a ketone at C-3 and esdpG then attaches hydroxy groups at both C-11 and C-12. After that, esdpI hydroxylates at C-20 and esdpH hydroxylates at C-6'. The ether bridge is generated by nucleophilic attack of the hydroxy group at C-20 to the carbonyl carbon at C-3. EsdpH can also functions prior to esdpI. The different combinations of these modification enzymes lead to the production of diverse shearone derivatives, shearone I being the end product of the pathway. The alpha-ketoglutarate-dependent dioxygenase esdpJ seems not to be involved in this pathway. The polypeptide is Polyprenyl transferase esdpC (Penicillium shearii (Eupenicillium shearii)).